The sequence spans 254 residues: Ankyrin repeat domain-containing protein 7 (254 aa).

ANK repeat units follow at residues 58-87, 91-120, 124-153, 157-186, and 190-219; these read KYRT…KINV, ENKS…DPDL, RYNT…DLEA, DGYT…DVNA, and YQRT…ELCY.

Testis specific.

The chain is Ankyrin repeat domain-containing protein 7 (ANKRD7) from Homo sapiens (Human).